Consider the following 511-residue polypeptide: Alpha-amylase 1A (511 aa).

Positions 1–15 (MKLFWLLFTIGFCWA) are cleaved as a signal peptide. At Gln-16 the chain carries Pyrrolidone carboxylic acid. Cystine bridges form between Cys-43–Cys-101, Cys-85–Cys-130, and Cys-156–Cys-175. Asn-115, Arg-173, and Asp-182 together coordinate Ca(2+). Position 210 (Arg-210) interacts with chloride. Asp-212 serves as the catalytic Nucleophile. His-216 contacts Ca(2+). Residue Glu-248 is the Proton donor of the active site. Chloride contacts are provided by Asn-313 and Arg-352. Residue Asn-365 is modified to Deamidated asparagine; partial. The cysteines at positions 393 and 399 are disulfide-linked. Deamidated asparagine; partial; alternate is present on Asn-427. An N-linked (GlcNAc...) asparagine glycan is attached at Asn-427. The cysteines at positions 465 and 477 are disulfide-linked. Asn-474 carries the post-translational modification Deamidated asparagine; partial. Asn-476 carries an N-linked (GlcNAc...) asparagine glycan.

This sequence belongs to the glycosyl hydrolase 13 family. In terms of assembly, monomer. It depends on Ca(2+) as a cofactor. Requires chloride as cofactor.

The protein resides in the secreted. The catalysed reaction is Endohydrolysis of (1-&gt;4)-alpha-D-glucosidic linkages in polysaccharides containing three or more (1-&gt;4)-alpha-linked D-glucose units.. Functionally, calcium-binding enzyme that initiates starch digestion in the oral cavity. Catalyzes the hydrolysis of internal (1-&gt;4)-alpha-D-glucosidic bonds, yielding a mixture of maltose, isomaltose, small amounts of glucose as well as small linear and branched oligosaccharides called dextrins. In Homo sapiens (Human), this protein is Alpha-amylase 1A.